Reading from the N-terminus, the 30-residue chain is Cysteine-rich venom protein okinavin (30 aa).

Residues serine 1–asparagine 30 form a disordered region.

The protein belongs to the CRISP family. Post-translationally, contains 8 disulfide bonds. In terms of tissue distribution, expressed by the venom gland.

The protein resides in the secreted. Inhibits calcium-activated potassium channels (KCa), voltage-gated potassium channel (Kv), and the calcium release channel/ryanodine receptor (RyR). This chain is Cysteine-rich venom protein okinavin, found in Ovophis okinavensis (Ryukyu Island pit viper).